We begin with the raw amino-acid sequence, 281 residues long: MEMO1 family protein Pars_0062 (281 aa).

The protein belongs to the MEMO1 family.

This Pyrobaculum arsenaticum (strain DSM 13514 / JCM 11321 / PZ6) protein is MEMO1 family protein Pars_0062.